Reading from the N-terminus, the 86-residue chain is Large ribosomal subunit protein bL31 (86 aa).

The segment at 66 to 86 (GMGSANSATSKEQKADKDSQK) is disordered. Basic and acidic residues predominate over residues 76 to 86 (KEQKADKDSQK).

This sequence belongs to the bacterial ribosomal protein bL31 family. Type A subfamily. In terms of assembly, part of the 50S ribosomal subunit.

Binds the 23S rRNA. This chain is Large ribosomal subunit protein bL31, found in Prochlorococcus marinus (strain MIT 9215).